Here is a 314-residue protein sequence, read N- to C-terminus: Protein OPG185 (314 aa).

The signal sequence occupies residues 1 to 16 (MTRLPILLLLISLVYA). The region spanning 17–121 (TPFPQTSKKI…NDTDKVDYEE (105 aa)) is the Ig-like V-type domain. The Virion surface segment spans residues 17–278 (TPFPQTSKKI…SNYKTKDFVE (262 aa)). The cysteines at positions 34 and 103 are disulfide-linked. 4 N-linked (GlcNAc...) asparagine; by host glycosylation sites follow: N37, N69, N112, and N161. Positions 193-202 (NTVSASSGES) are enriched in polar residues. Positions 193–214 (NTVSASSGESTTDETPEPITDK) are disordered. Residue N253 is glycosylated (N-linked (GlcNAc...) asparagine; by host). Residues 279–302 (IFGITALIILSAVAIFCITYYIYN) traverse the membrane as a helical segment. Topologically, residues 303-314 (KRSRKYKTENKV) are intravirion.

It belongs to the orthopoxvirus OPG185 family. As to quaternary structure, heterodimerizes with OPG040. The heterodimer OPG185-OPG040 interacts with components of the entry fusion complex OPG143 and OPG094. Heterodimer with C3/VPC protein; disulfide-linked. Glycosylated; contains phosphate and sulfate-substituted glycans. O-glycosylation is required for hemagglutination and hemadsorption activities of infected cell membranes.

Its subcellular location is the virion membrane. The protein resides in the host membrane. Prevents cell to cell fusion by interacting with and directing the viral OPG040 protein on the host plasma membrane. The OPG185-OPG040 complex associates with components of the entry fusion complex (EFC) presumably to avoid superinfection and syncytium formation. Via its interaction with C3/VCP protein, protects the infected cell and probably also the extracellular enveloped virus from complement attack. In Bos taurus (Bovine), this protein is Protein OPG185 (OPG185).